A 398-amino-acid chain; its full sequence is Elongation factor Tu (398 aa).

Residues 10 to 207 (KPHVNIGTIG…TVDEYIPEPE (198 aa)) form the tr-type G domain. The tract at residues 19–26 (GHVDHGKT) is G1. Residue 19–26 (GHVDHGKT) coordinates GTP. Threonine 26 is a Mg(2+) binding site. A G2 region spans residues 63–67 (GITIN). Residues 84-87 (DAPG) are G3. GTP contacts are provided by residues 84–88 (DAPGH) and 139–142 (NKVD). The tract at residues 139–142 (NKVD) is G4. The tract at residues 177–179 (SAL) is G5.

This sequence belongs to the TRAFAC class translation factor GTPase superfamily. Classic translation factor GTPase family. EF-Tu/EF-1A subfamily. Monomer.

The protein resides in the cytoplasm. The enzyme catalyses GTP + H2O = GDP + phosphate + H(+). GTP hydrolase that promotes the GTP-dependent binding of aminoacyl-tRNA to the A-site of ribosomes during protein biosynthesis. In Streptococcus pyogenes serotype M49 (strain NZ131), this protein is Elongation factor Tu.